We begin with the raw amino-acid sequence, 374 residues long: Glutamate 5-kinase (374 aa).

Lys-9 contacts ATP. Ser-49, Asp-136, and Asn-148 together coordinate substrate. Residues 168–169 (TD) and 210–216 (TGGMRSK) contribute to the ATP site. The 79-residue stretch at 276-354 (AGMITVDSGA…EEARQYSYLH (79 aa)) folds into the PUA domain.

This sequence belongs to the glutamate 5-kinase family.

The protein localises to the cytoplasm. The catalysed reaction is L-glutamate + ATP = L-glutamyl 5-phosphate + ADP. It participates in amino-acid biosynthesis; L-proline biosynthesis; L-glutamate 5-semialdehyde from L-glutamate: step 1/2. Functionally, catalyzes the transfer of a phosphate group to glutamate to form L-glutamate 5-phosphate. The chain is Glutamate 5-kinase from Geobacillus kaustophilus (strain HTA426).